A 202-amino-acid chain; its full sequence is Protein N-terminal glutamine amidohydrolase (202 aa).

Residues cysteine 27, histidine 80, and aspartate 96 contribute to the active site.

The protein belongs to the NTAQ1 family. Monomer.

It localises to the cytoplasm. Its subcellular location is the cytosol. It is found in the nucleus. The catalysed reaction is N-terminal L-glutaminyl-[protein] + H2O = N-terminal L-glutamyl-[protein] + NH4(+). Mediates the side-chain deamidation of N-terminal glutamine residues to glutamate, an important step in N-end rule pathway of protein degradation. Conversion of the resulting N-terminal glutamine to glutamate renders the protein susceptible to arginylation, polyubiquitination and degradation as specified by the N-end rule. Does not act on substrates with internal or C-terminal glutamine and does not act on non-glutamine residues in any position. Does not deaminate acetylated N-terminal glutamine. With the exception of proline, all tested second-position residues on substrate peptides do not greatly influence the activity. In contrast, a proline at position 2, virtually abolishes deamidation of N-terminal glutamine. The sequence is that of Protein N-terminal glutamine amidohydrolase (ntaq1) from Danio rerio (Zebrafish).